Reading from the N-terminus, the 123-residue chain is Large ribosomal subunit protein uL18 (123 aa).

It belongs to the universal ribosomal protein uL18 family. In terms of assembly, part of the 50S ribosomal subunit; part of the 5S rRNA/L5/L18/L25 subcomplex. Contacts the 5S and 23S rRNAs.

This is one of the proteins that bind and probably mediate the attachment of the 5S RNA into the large ribosomal subunit, where it forms part of the central protuberance. The sequence is that of Large ribosomal subunit protein uL18 from Wolbachia pipientis wMel.